A 266-amino-acid chain; its full sequence is Undecaprenyl-diphosphatase 3 (266 aa).

Helical transmembrane passes span 4-24, 43-63, 86-106, 109-129, 145-165, 186-206, 219-239, and 246-266; these read IEAF…FLPI, SGRA…CWLY, FSVL…VDFI, VLFS…IIFW, ITFK…IPGT, TEFS…YDLL, NIGL…KALV, and TLRV…FVML.

This sequence belongs to the UppP family.

Its subcellular location is the cell inner membrane. The enzyme catalyses di-trans,octa-cis-undecaprenyl diphosphate + H2O = di-trans,octa-cis-undecaprenyl phosphate + phosphate + H(+). Functionally, catalyzes the dephosphorylation of undecaprenyl diphosphate (UPP). Confers resistance to bacitracin. The protein is Undecaprenyl-diphosphatase 3 of Acinetobacter baylyi (strain ATCC 33305 / BD413 / ADP1).